The primary structure comprises 541 residues: Chaperonin GroEL (541 aa).

ATP is bound by residues 29-32, 86-90, glycine 413, 477-479, and aspartate 493; these read TLGP, DGTTT, and DAL.

Belongs to the chaperonin (HSP60) family. Forms a cylinder of 14 subunits composed of two heptameric rings stacked back-to-back. Interacts with the co-chaperonin GroES.

It is found in the cytoplasm. It catalyses the reaction ATP + H2O + a folded polypeptide = ADP + phosphate + an unfolded polypeptide.. Its function is as follows. Together with its co-chaperonin GroES, plays an essential role in assisting protein folding. The GroEL-GroES system forms a nano-cage that allows encapsulation of the non-native substrate proteins and provides a physical environment optimized to promote and accelerate protein folding. In Clostridium botulinum (strain Loch Maree / Type A3), this protein is Chaperonin GroEL.